A 602-amino-acid polypeptide reads, in one-letter code: Sulfite reductase [NADPH] flavoprotein alpha-component (602 aa).

Residues 68-206 form the Flavodoxin-like domain; the sequence is ITIISASQTG…NYIQWSEELL (139 aa). Residues 74 to 79, 121 to 124, and 157 to 166 each bind FMN; these read SQTGNA, STQG, and LGDVSYNLFC. The FAD-binding FR-type domain maps to 237 to 451; it reads YKPAVATVLL…VEEKSNFRLP (215 aa). Residues threonine 325, lysine 359, 389–392, 407–409, and 422–425 each bind FAD; these read RLYS, TVG, and GGSS. NADP(+) contacts are provided by residues 522-523, 528-532, and aspartate 564; these read SR and KIYVQ. Tyrosine 602 contacts FAD.

The protein belongs to the NADPH-dependent sulphite reductase flavoprotein subunit CysJ family. It in the N-terminal section; belongs to the flavodoxin family. This sequence in the C-terminal section; belongs to the flavoprotein pyridine nucleotide cytochrome reductase family. As to quaternary structure, alpha(8)-beta(8). The alpha component is a flavoprotein, the beta component is a hemoprotein. FAD serves as cofactor. It depends on FMN as a cofactor.

It carries out the reaction hydrogen sulfide + 3 NADP(+) + 3 H2O = sulfite + 3 NADPH + 4 H(+). The protein operates within sulfur metabolism; hydrogen sulfide biosynthesis; hydrogen sulfide from sulfite (NADPH route): step 1/1. Component of the sulfite reductase complex that catalyzes the 6-electron reduction of sulfite to sulfide. This is one of several activities required for the biosynthesis of L-cysteine from sulfate. The flavoprotein component catalyzes the electron flow from NADPH -&gt; FAD -&gt; FMN to the hemoprotein component. This Buchnera aphidicola subsp. Schizaphis graminum (strain Sg) protein is Sulfite reductase [NADPH] flavoprotein alpha-component.